Consider the following 420-residue polypeptide: Tol-Pal system protein TolB (420 aa).

Residues 1–21 form the signal peptide; the sequence is MKLFVHLVLFISLFIPYFTKA.

Belongs to the TolB family. As to quaternary structure, the Tol-Pal system is composed of five core proteins: the inner membrane proteins TolA, TolQ and TolR, the periplasmic protein TolB and the outer membrane protein Pal. They form a network linking the inner and outer membranes and the peptidoglycan layer.

The protein resides in the periplasm. Functionally, part of the Tol-Pal system, which plays a role in outer membrane invagination during cell division and is important for maintaining outer membrane integrity. The sequence is that of Tol-Pal system protein TolB from Wolbachia sp. subsp. Drosophila simulans (strain wRi).